The chain runs to 262 residues: 5'-nucleotidase SurE (262 aa).

A divalent metal cation is bound by residues Asp11, Asp12, Ser43, and Asn101. The segment covering 220-229 has biased composition (basic and acidic residues); that stretch reads SAGDGPKEWP. Residues 220 to 246 form a disordered region; the sequence is SAGDGPKEWPSDVSQIETNSPSLTPIQ. Positions 231-244 are enriched in polar residues; that stretch reads DVSQIETNSPSLTP.

It belongs to the SurE nucleotidase family. A divalent metal cation is required as a cofactor.

It localises to the cytoplasm. It catalyses the reaction a ribonucleoside 5'-phosphate + H2O = a ribonucleoside + phosphate. Its function is as follows. Nucleotidase that shows phosphatase activity on nucleoside 5'-monophosphates. The polypeptide is 5'-nucleotidase SurE (Prochlorococcus marinus (strain SARG / CCMP1375 / SS120)).